The sequence spans 536 residues: Chaperonin GroEL 2 (536 aa).

ATP is bound by residues 29–32, 86–90, G413, 476–478, and D492; these read TLGP, DGTTT, and NAA.

This sequence belongs to the chaperonin (HSP60) family. In terms of assembly, forms a cylinder of 14 subunits composed of two heptameric rings stacked back-to-back. Interacts with the co-chaperonin GroES.

The protein resides in the cytoplasm. It carries out the reaction ATP + H2O + a folded polypeptide = ADP + phosphate + an unfolded polypeptide.. In terms of biological role, together with its co-chaperonin GroES, plays an essential role in assisting protein folding. The GroEL-GroES system forms a nano-cage that allows encapsulation of the non-native substrate proteins and provides a physical environment optimized to promote and accelerate protein folding. This Moorella thermoacetica (strain ATCC 39073 / JCM 9320) protein is Chaperonin GroEL 2.